The primary structure comprises 423 residues: Replication factor C large subunit (423 aa).

Position 50–57 (50–57) interacts with ATP; it reads GPAGCGKT.

Belongs to the activator 1 small subunits family. RfcL subfamily. In terms of assembly, heteromultimer composed of small subunits (RfcS) and large subunits (RfcL).

Part of the RFC clamp loader complex which loads the PCNA sliding clamp onto DNA. In Staphylothermus marinus (strain ATCC 43588 / DSM 3639 / JCM 9404 / F1), this protein is Replication factor C large subunit.